The chain runs to 422 residues: UDP-N-acetylglucosamine 1-carboxyvinyltransferase (422 aa).

Position 24–25 (24–25 (KN)) interacts with phosphoenolpyruvate. Residue Arg-93 coordinates UDP-N-acetyl-alpha-D-glucosamine. Catalysis depends on Cys-117, which acts as the Proton donor. Cys-117 bears the 2-(S-cysteinyl)pyruvic acid O-phosphothioketal mark. UDP-N-acetyl-alpha-D-glucosamine is bound by residues 122–126 (RPVDL), 162–165 (KVSV), Asp-307, and Ile-329.

It belongs to the EPSP synthase family. MurA subfamily.

It is found in the cytoplasm. The enzyme catalyses phosphoenolpyruvate + UDP-N-acetyl-alpha-D-glucosamine = UDP-N-acetyl-3-O-(1-carboxyvinyl)-alpha-D-glucosamine + phosphate. The protein operates within cell wall biogenesis; peptidoglycan biosynthesis. In terms of biological role, cell wall formation. Adds enolpyruvyl to UDP-N-acetylglucosamine. This Vibrio atlanticus (strain LGP32) (Vibrio splendidus (strain Mel32)) protein is UDP-N-acetylglucosamine 1-carboxyvinyltransferase.